Here is a 1548-residue protein sequence, read N- to C-terminus: Dual oxidase 2 (1548 aa).

The N-terminal stretch at 1–25 (MLRARPEALMLLGALLTGSLGPSGN) is a signal peptide. Residues 26–601 (QDALSLPWEV…EGSSPGFAIT (576 aa)) lie on the Extracellular side of the membrane. Residues 30 to 596 (SLPWEVQRYD…VLDFFEGSSP (567 aa)) are peroxidase-like; mediates peroxidase activity. N-linked (GlcNAc...) asparagine glycans are attached at residues Asn-100, Asn-348, Asn-382, Asn-455, and Asn-537. Cys-124 and Cys-1162 form a disulfide bridge. Residues 602–622 (IIALCCLPLVSLLLSGVVAYF) form a helical membrane-spanning segment. The Cytoplasmic segment spans residues 623-1041 (RGREHKKLQK…KRFVENYRRH (419 aa)). 3 consecutive EF-hand domains span residues 819-854 (PQDM…FMKG), 855-890 (SPED…FIEI), and 899-934 (QLAE…HDSE). Ca(2+) contacts are provided by Asp-832, Asp-834, Asn-836, Tyr-838, Glu-843, Asp-868, Asp-870, Asn-872, and Glu-879. An interaction with TXNDC11 region spans residues 960–1245 (ISCRVSFITR…GSYALIQLPT (286 aa)). Residues 971-991 (PGERSHPQGLGPPAPEAPELG) form a disordered region. The helical transmembrane segment at 1042–1062 (IVCVAIFSAICVGVFADRAYY) threads the bilayer. Residues 1063-1076 (YGFASPPSDIAQTT) lie on the Extracellular side of the membrane. The helical transmembrane segment at 1077–1097 (LVGIILSRGTAASVSFMFSYI) threads the bilayer. One can recognise a Ferric oxidoreductase domain in the interval 1084-1266 (RGTAASVSFM…YGGDKLVSLS (183 aa)). Over 1098-1128 (LLTMCRNLITFLRETFLNRYVPFDAAVDFHR) the chain is Cytoplasmic. A helical membrane pass occupies residues 1129–1151 (WIAMAAVVLAILHSAGHAVNVYI). The Extracellular segment spans residues 1152-1185 (FSVSPLSLLACIFPNVFVNDGSKLPQKFYWWFFQ). The helical transmembrane segment at 1186–1206 (TVPGMTGVLLLLVLAIMYVFA) threads the bilayer. Topologically, residues 1207–1223 (SHHFRRRSFRGFWLTHH) are cytoplasmic. 2 helical membrane-spanning segments follow: residues 1224–1244 (LYIL…IQLP) and 1245–1265 (TFHI…LVSL). Topologically, residues 1266–1548 (SRKKVEISVV…AHFMHHYENF (283 aa)) are cytoplasmic. One can recognise an FAD-binding FR-type domain in the interval 1267–1373 (RKKVEISVVK…DGPFGEGHQE (107 aa)).

This sequence in the N-terminal section; belongs to the peroxidase family. In terms of assembly, heterodimer with DUOXA2; disulfide-linked. Interacts with TXNDC11, TPO and CYBA. Post-translationally, N-glycosylated. Expressed in colon, small intestine, duodenum and tracheal surface epithelial cells (at protein level). Expressed in thyrocytes. Also detected in kidney, liver, lung, pancreas, prostate, salivary glands, rectum and testis.

The protein localises to the apical cell membrane. Its subcellular location is the cell junction. The enzyme catalyses NADH + O2 + H(+) = H2O2 + NAD(+). It catalyses the reaction NADPH + O2 + H(+) = H2O2 + NADP(+). It functions in the pathway hormone biosynthesis; thyroid hormone biosynthesis. Its activity is regulated as follows. Peroxidase activity is inhibited by aminobenzohydrazide. The NADPH oxidase activity is calcium-dependent. Functionally, generates hydrogen peroxide which is required for the activity of thyroid peroxidase/TPO and lactoperoxidase/LPO. Plays a role in thyroid hormones synthesis and lactoperoxidase-mediated antimicrobial defense at the surface of mucosa. May have its own peroxidase activity through its N-terminal peroxidase-like domain. This chain is Dual oxidase 2 (DUOX2), found in Homo sapiens (Human).